A 304-amino-acid polypeptide reads, in one-letter code: Protein translocase subunit SecF (304 aa).

6 helical membrane-spanning segments follow: residues 20–40 (AKLF…LIFT), 143–163 (AMMA…IRFE), 164–184 (LIFA…TLGF), 195–215 (TVVA…IVVF), 244–266 (LSRT…IFGG), and 276–298 (LVIG…VYLI).

This sequence belongs to the SecD/SecF family. SecF subfamily. Forms a complex with SecD. Part of the essential Sec protein translocation apparatus which comprises SecA, SecYEG and auxiliary proteins SecDF. Other proteins may also be involved.

The protein resides in the cell inner membrane. Part of the Sec protein translocase complex. Interacts with the SecYEG preprotein conducting channel. SecDF uses the proton motive force (PMF) to complete protein translocation after the ATP-dependent function of SecA. The chain is Protein translocase subunit SecF from Calditerrivibrio nitroreducens (strain DSM 19672 / NBRC 101217 / Yu37-1).